We begin with the raw amino-acid sequence, 380 residues long: Lipoyl synthase, mitochondrial (380 aa).

The [4Fe-4S] cluster site is built by cysteine 104, cysteine 109, cysteine 115, cysteine 135, cysteine 139, cysteine 142, and serine 350. The Radical SAM core domain occupies 120 to 339 (EHGTQTATIM…ETRGNELGFL (220 aa)).

It belongs to the radical SAM superfamily. Lipoyl synthase family. Requires [4Fe-4S] cluster as cofactor.

It localises to the mitochondrion. It carries out the reaction [[Fe-S] cluster scaffold protein carrying a second [4Fe-4S](2+) cluster] + N(6)-octanoyl-L-lysyl-[protein] + 2 oxidized [2Fe-2S]-[ferredoxin] + 2 S-adenosyl-L-methionine + 4 H(+) = [[Fe-S] cluster scaffold protein] + N(6)-[(R)-dihydrolipoyl]-L-lysyl-[protein] + 4 Fe(3+) + 2 hydrogen sulfide + 2 5'-deoxyadenosine + 2 L-methionine + 2 reduced [2Fe-2S]-[ferredoxin]. It functions in the pathway protein modification; protein lipoylation via endogenous pathway; protein N(6)-(lipoyl)lysine from octanoyl-[acyl-carrier-protein]: step 2/2. Functionally, catalyzes the radical-mediated insertion of two sulfur atoms into the C-6 and C-8 positions of the octanoyl moiety bound to the lipoyl domains of lipoate-dependent enzymes, thereby converting the octanoylated domains into lipoylated derivatives. The chain is Lipoyl synthase, mitochondrial from Culex quinquefasciatus (Southern house mosquito).